A 442-amino-acid chain; its full sequence is Tol-Pal system protein TolB (442 aa).

A signal peptide spans 1 to 26; sequence MRHRSCFSLFAGLALVFCLAVGTAAA.

The protein belongs to the TolB family. In terms of assembly, the Tol-Pal system is composed of five core proteins: the inner membrane proteins TolA, TolQ and TolR, the periplasmic protein TolB and the outer membrane protein Pal. They form a network linking the inner and outer membranes and the peptidoglycan layer.

It localises to the periplasm. Its function is as follows. Part of the Tol-Pal system, which plays a role in outer membrane invagination during cell division and is important for maintaining outer membrane integrity. The sequence is that of Tol-Pal system protein TolB from Nitratidesulfovibrio vulgaris (strain ATCC 29579 / DSM 644 / CCUG 34227 / NCIMB 8303 / VKM B-1760 / Hildenborough) (Desulfovibrio vulgaris).